The sequence spans 295 residues: Protein SCO1, mitochondrial (295 aa).

A helical membrane pass occupies residues 76–92; the sequence is AIALFLAVGGALSYFFN. Positions 148, 152, and 239 each coordinate Cu cation.

This sequence belongs to the SCO1/2 family.

Its subcellular location is the mitochondrion inner membrane. Functionally, required for the accumulation of subunits 1 and 2 of cytochrome c oxidase complex. Thought to play a role in either mitochondrial copper transport or insertion of copper into the active site of COX. The sequence is that of Protein SCO1, mitochondrial (SCO1) from Saccharomyces cerevisiae (strain ATCC 204508 / S288c) (Baker's yeast).